Reading from the N-terminus, the 118-residue chain is Small ribosomal subunit protein uS13 (118 aa).

The segment at 99 to 118 is disordered; the sequence is GQRTRTNARTRKGPRKAIKK.

This sequence belongs to the universal ribosomal protein uS13 family. As to quaternary structure, part of the 30S ribosomal subunit. Forms a loose heterodimer with protein S19. Forms two bridges to the 50S subunit in the 70S ribosome.

Located at the top of the head of the 30S subunit, it contacts several helices of the 16S rRNA. In the 70S ribosome it contacts the 23S rRNA (bridge B1a) and protein L5 of the 50S subunit (bridge B1b), connecting the 2 subunits; these bridges are implicated in subunit movement. Contacts the tRNAs in the A and P-sites. The polypeptide is Small ribosomal subunit protein uS13 (Xylella fastidiosa (strain M12)).